A 688-amino-acid polypeptide reads, in one-letter code: ERI1 exoribonuclease 2 (688 aa).

The Exonuclease domain maps to 37–226 (LIVVDFESTC…DDSRNTALLA (190 aa)). The Mg(2+) site is built by aspartate 41, glutamate 43, and aspartate 156. Residue glutamate 43 is the Proton acceptor of the active site. Glutamate 43 provides a ligand contact to AMP. Histidine 213 acts as the Proton acceptor in catalysis. Histidine 213 is an AMP binding site. Aspartate 218 is a Mg(2+) binding site. Positions 337–360 (VDQLHSPTLNPPLTMQKPSKSDQL) are enriched in polar residues. 2 disordered regions span residues 337 to 367 (VDQL…DSSK) and 523 to 546 (DPLL…TKRQ). 4 residues coordinate Zn(2+): cysteine 594, cysteine 596, cysteine 619, and cysteine 631. The segment at 594 to 640 (CKCGRRSKRLIVSNNGPNHGKAFYCCPVGKYQQDRKCCGYFKWEQTL) adopts a GRF-type zinc-finger fold.

The protein belongs to the ERI2 family. The cofactor is Mg(2+).

This chain is ERI1 exoribonuclease 2 (Eri2), found in Mus musculus (Mouse).